Consider the following 337-residue polypeptide: DNA-directed RNA polymerase subunit alpha (337 aa).

The segment at 1 to 233 (MVREEVAVST…DLFIPFLHAE (233 aa)) is alpha N-terminal domain (alpha-NTD). Residues 266 to 337 (GIALKCIFID…FTIDLPKNKF (72 aa)) form an alpha C-terminal domain (alpha-CTD) region.

This sequence belongs to the RNA polymerase alpha chain family. As to quaternary structure, in plastids the minimal PEP RNA polymerase catalytic core is composed of four subunits: alpha, beta, beta', and beta''. When a (nuclear-encoded) sigma factor is associated with the core the holoenzyme is formed, which can initiate transcription.

Its subcellular location is the plastid. The protein resides in the chloroplast. It carries out the reaction RNA(n) + a ribonucleoside 5'-triphosphate = RNA(n+1) + diphosphate. In terms of biological role, DNA-dependent RNA polymerase catalyzes the transcription of DNA into RNA using the four ribonucleoside triphosphates as substrates. This chain is DNA-directed RNA polymerase subunit alpha, found in Liriodendron tulipifera (Tuliptree).